We begin with the raw amino-acid sequence, 48 residues long: uncharacterized protein (48 aa).

Its subcellular location is the mitochondrion. This is an uncharacterized protein from Emericella nidulans (Aspergillus nidulans).